We begin with the raw amino-acid sequence, 200 residues long: MKIGIIAYQGSFEEHYLQLKRAFDKWSINGEITPVKIPKDLKDIDGVIIPGGESTTIGLVAKRLGILDELKEKITSGLPVMGTCAGAIMLAKEVSDAKVGKTSQPLIGAMNISIIRNYYGRQRESFEAIIDLSKIGKGKANVVFIRAPAITKLWGKTQSLAELNGVTVLAEENNILATTFHPELSDTTSIHEYFLHLVKG.

52 to 54 (GES) is a binding site for L-glutamine. Cys-84 serves as the catalytic Nucleophile. Residues Arg-116 and 145-146 (IR) contribute to the L-glutamine site. Catalysis depends on charge relay system residues His-181 and Glu-183.

It belongs to the glutaminase PdxT/SNO family. In the presence of PdxS, forms a dodecamer of heterodimers. Only shows activity in the heterodimer.

It catalyses the reaction aldehydo-D-ribose 5-phosphate + D-glyceraldehyde 3-phosphate + L-glutamine = pyridoxal 5'-phosphate + L-glutamate + phosphate + 3 H2O + H(+). The catalysed reaction is L-glutamine + H2O = L-glutamate + NH4(+). It participates in cofactor biosynthesis; pyridoxal 5'-phosphate biosynthesis. Functionally, catalyzes the hydrolysis of glutamine to glutamate and ammonia as part of the biosynthesis of pyridoxal 5'-phosphate. The resulting ammonia molecule is channeled to the active site of PdxS. The chain is Pyridoxal 5'-phosphate synthase subunit PdxT from Saccharolobus islandicus (strain Y.N.15.51 / Yellowstone #2) (Sulfolobus islandicus).